Here is a 276-residue protein sequence, read N- to C-terminus: F420-dependent methylenetetrahydromethanopterin dehydrogenase (276 aa).

The protein belongs to the MTD family.

It catalyses the reaction 5,10-methylenetetrahydromethanopterin + oxidized coenzyme F420-(gamma-L-Glu)(n) + 2 H(+) = 5,10-methenyl-5,6,7,8-tetrahydromethanopterin + reduced coenzyme F420-(gamma-L-Glu)(n). Functionally, catalyzes the oxidation of methylene-H(4)MPT to methenyl-H(4)MPT(+). The chain is F420-dependent methylenetetrahydromethanopterin dehydrogenase from Methanosphaera stadtmanae (strain ATCC 43021 / DSM 3091 / JCM 11832 / MCB-3).